A 78-amino-acid polypeptide reads, in one-letter code: Apolipoprotein C-I (78 aa).

The N-terminal stretch at 1–26 (MRLILCLPVLVVVLLMVLEGPAPAQG) is a signal peptide.

This sequence belongs to the apolipoprotein C1 family.

The protein resides in the secreted. Functionally, inhibitor of lipoprotein binding to the low density lipoprotein (LDL) receptor, LDL receptor-related protein, and very low density lipoprotein (VLDL) receptor. Associates with high density lipoproteins (HDL) and the triacylglycerol-rich lipoproteins in the plasma and makes up about 10% of the protein of the VLDL and 2% of that of HDL. Appears to interfere directly with fatty acid uptake and is also the major plasma inhibitor of cholesteryl ester transfer protein (CETP). Binds free fatty acids and reduces their intracellular esterification. Modulates the interaction of APOE with beta-migrating VLDL and inhibits binding of beta-VLDL to the LDL receptor-related protein. The polypeptide is Apolipoprotein C-I (APOC1) (Acinonyx jubatus (Cheetah)).